Reading from the N-terminus, the 122-residue chain is MIQMQTNLDVADNSGARRVQCIKVLGGSHRRYASVGDIIVVSVKEAIPRGRVKKGDVRKAVVVRTAKEVKREDGTSIRFDRNAAVILNNQGEPVGTRIFGPVVRELRAKNFMKIISLAPEVL.

The protein belongs to the universal ribosomal protein uL14 family. Part of the 50S ribosomal subunit. Forms a cluster with proteins L3 and L19. In the 70S ribosome, L14 and L19 interact and together make contacts with the 16S rRNA in bridges B5 and B8.

Binds to 23S rRNA. Forms part of two intersubunit bridges in the 70S ribosome. This chain is Large ribosomal subunit protein uL14, found in Paracoccus denitrificans (strain Pd 1222).